A 205-amino-acid chain; its full sequence is MKSYLKALVFAVLFLFILGFVYPTVTSLITEHALPFQSEGQPVEIDGHIYGSYLLAEAFNSSFFFHPRPSAIDYNLSESGSYDYSLGNPAMLNLTEKYLHRFLSENPGVNISEIPYAMISYSGSGLDPGIPLQGAIIQIPRISIAIHNITNLSVSDLYSYLYNLVNSTKTQNFPFFGSYYVNVVRLNVDIVEFLLKGGYISQSQI.

Residues V9–I29 form a helical membrane-spanning segment.

Belongs to the KdpC family. As to quaternary structure, the system is composed of three essential subunits: KdpA, KdpB and KdpC.

The protein localises to the cell membrane. Functionally, part of the high-affinity ATP-driven potassium transport (or Kdp) system, which catalyzes the hydrolysis of ATP coupled with the electrogenic transport of potassium into the cytoplasm. This subunit acts as a catalytic chaperone that increases the ATP-binding affinity of the ATP-hydrolyzing subunit KdpB by the formation of a transient KdpB/KdpC/ATP ternary complex. The chain is Potassium-transporting ATPase KdpC subunit from Thermoplasma acidophilum (strain ATCC 25905 / DSM 1728 / JCM 9062 / NBRC 15155 / AMRC-C165).